The following is a 484-amino-acid chain: Serine protease HTR4 (484 aa).

The signal sequence occupies residues 1–28 (MARPLQRPAGLGPFVLLWLLLPAPSGRG). The IGFBP N-terminal domain maps to 36–114 (PVPRCPAACE…GRPLGTCGCP (79 aa)). Cystine bridges form between Cys-40–Cys-66, Cys-44–Cys-68, Cys-49–Cys-69, Cys-55–Cys-72, Cys-80–Cys-94, Cys-88–Cys-111, Cys-113–Cys-132, and Cys-121–Cys-157. The Kazal-like domain occupies 105–159 (GRPLGTCGCPAAGATVCGSDGRTYRSLCALRAENRAARLRGALPAVPVQKGDCGD). The segment at 209-369 (ASGFIVSEDG…IPSDRIRQFL (161 aa)) is serine protease. Active-site charge relay system residues include His-225, Asp-255, and Ser-333. The 83-residue stretch at 390–472 (LRMLPLTMNL…LSLLVRRKSQ (83 aa)) folds into the PDZ domain.

The protein belongs to the peptidase S1C family.

Its subcellular location is the secreted. Functionally, serine protease. The chain is Serine protease HTR4 (HTRA4) from Bos taurus (Bovine).